The sequence spans 768 residues: MATEGMILTNHDHQIRVGVLTVSDSCFRNLAEDRSGINLKDLVQDPSLLGGTISAYKIVPDEIEEIKETLIDWCDEKELNLILTTGGTGFAPRDVTPEKFPTFPFCGLQKGATKEVIEREAPGMALAMLMGSLNVTPLGMLSRPVCGIRGKTLIINLPGSKKGSQECFQFILPALPHAIDLLRDAIVKVKEVHDELEDLPSPPPPLSPPPTTSPHKQTEDKGVQCEEEEEEKKDSGVASTEDSSSSHITAAALAAKIPDSIISRGVQVLPRDTASLSTTPSESPRAQATSRLSTASCPTPKQIRRPDESKGVASRVGSLKVQSRCSSKENILRASHSAVDITKVARRHRMSPFPLTSMDKAFITVLEMTPVLGTEIINYRDGMGRVLAQDVYAKDNLPPFPASVKDGYAVRAADGPGDRFIIGESQAGEQPTQTVMPGQVMRVTTGAPIPCGADAVVQVEDTELIRESDDGTEELEVRILVQARPGQDIRPIGHDIKRGECVLAKGTHMGPSEIGLLATVGVTEVEVNKFPVVAVMSTGNELLNPEDDLLPGKIRDSNRSTLLATIQEHGYPTINLGIVGDNPDDLLNALNEGISRADVIITSGGVSMGEKDYLKQVLDIDLHAQIHFGRVFMKPGLPTTFATLDIDGVRKIIFALPGNPVSAVVTCNLFVVPALRKMQGILDPRPTIIKARLSCDVKLDPRPEYHRCILTWHHQEPLPWAQSTGNQMSSRLMSMRSANGLLMLPPKTEQYVELHKGEVVDVMVIGRL.

The segment at 14–166 (QIRVGVLTVS…LPGSKKGSQE (153 aa)) is MPT Mo-transferase. Residues 153–348 (LIINLPGSKK…VDITKVARRH (196 aa)) form an interaction with GABARAP region. 2 disordered regions span residues 194–245 (DELE…DSSS) and 273–316 (TASL…ASRV). Residues 200-212 (PSPPPPLSPPPTT) show a composition bias toward pro residues. 2 positions are modified to phosphoserine: Ser201 and Ser207. Position 211 is a phosphothreonine (Thr211). At Ser213 the chain carries Phosphoserine. Cys225 carries S-palmitoyl cysteine lipidation. Residues 274–299 (ASLSTTPSESPRAQATSRLSTASCPT) show a composition bias toward polar residues. Ser275 bears the Phosphoserine mark. A phosphothreonine mark is found at Thr278 and Thr279. Phosphoserine occurs at positions 281 and 283. Residue Cys297 is the site of S-palmitoyl cysteine attachment. An MPT adenylyltransferase region spans residues 326 to 768 (SSKENILRAS…VVDVMVIGRL (443 aa)). Residue Ser337 is modified to Phosphoserine.

It in the N-terminal section; belongs to the MoaB/Mog family. The protein in the C-terminal section; belongs to the MoeA family. Homotrimer, homodimer and homooligomer. Interacts with SRGAP2 (via SH3 domain). Interacts with GLRB. Interacts with GABARAP. Interacts with GABRA3. GABRA3 and GLRB occupy overlapping binding sites. Interacts with ARHGAP32; IQSEC3, INSYN1 and INSYN2A. Mg(2+) serves as cofactor. Phosphorylated. In terms of processing, palmitoylated. Palmitoylation is stimulated by GABA type A receptors activity. Palmitoylation by ZDHHC12 regulates clustering at synapses. As to expression, expressed in tissues including spinal cord, brain, liver, kidney and lung.

The protein resides in the postsynaptic cell membrane. The protein localises to the cell membrane. Its subcellular location is the cytoplasm. It is found in the cytosol. It localises to the cytoskeleton. The protein resides in the cell projection. The protein localises to the dendrite. Its subcellular location is the postsynaptic density. It catalyses the reaction molybdopterin + ATP + H(+) = adenylyl-molybdopterin + diphosphate. The enzyme catalyses adenylyl-molybdopterin + molybdate = Mo-molybdopterin + AMP + H(+). It participates in cofactor biosynthesis; molybdopterin biosynthesis. With respect to regulation, inhibited by copper and tungsten. In terms of biological role, microtubule-associated protein involved in membrane protein-cytoskeleton interactions. It is thought to anchor the inhibitory glycine receptor (GLYR) to subsynaptic microtubules. Acts as a major instructive molecule at inhibitory synapses, where it also clusters GABA type A receptors. Its function is as follows. Also has a catalytic activity and catalyzes two steps in the biosynthesis of the molybdenum cofactor. In the first step, molybdopterin is adenylated. Subsequently, molybdate is inserted into adenylated molybdopterin and AMP is released. This is Gephyrin (Gphn) from Rattus norvegicus (Rat).